Here is a 94-residue protein sequence, read N- to C-terminus: Co-chaperonin GroES (94 aa).

The protein belongs to the GroES chaperonin family. In terms of assembly, heptamer of 7 subunits arranged in a ring. Interacts with the chaperonin GroEL.

The protein localises to the cytoplasm. Together with the chaperonin GroEL, plays an essential role in assisting protein folding. The GroEL-GroES system forms a nano-cage that allows encapsulation of the non-native substrate proteins and provides a physical environment optimized to promote and accelerate protein folding. GroES binds to the apical surface of the GroEL ring, thereby capping the opening of the GroEL channel. This is Co-chaperonin GroES from Halothermothrix orenii (strain H 168 / OCM 544 / DSM 9562).